Here is a 140-residue protein sequence, read N- to C-terminus: Vacuolar protein sorting-associated protein 55 homolog (140 aa).

Residues 1 to 16 (MADVPGYLRTCLDMGK) lie on the Cytoplasmic side of the membrane. Residues 17–37 (IAFLAILVSTGIVLQILACAL) form a helical membrane-spanning segment. The Lumenal segment spans residues 38–40 (FNN). A helical transmembrane segment spans residues 41 to 61 (WWPMLSVIMYVLLPMPLLFFG). Residues 62-75 (GSDSTSLFNESDNS) lie on the Cytoplasmic side of the membrane. The chain crosses the membrane as a helical span at residues 76–98 (WINAAKFLTGASAVGSVAIPSIL). Over 99–108 (KHAGLIGWGA) the chain is Lumenal. A helical transmembrane segment spans residues 109-129 (LALDLSSYVVFLVAILGYICI). At 130-140 (GDASDNYYSYI) the chain is on the cytoplasmic side.

It belongs to the OB-RGRP/VPS55 family.

The protein resides in the endosome membrane. Involved in endosomal protein transport. This chain is Vacuolar protein sorting-associated protein 55 homolog, found in Arabidopsis thaliana (Mouse-ear cress).